Reading from the N-terminus, the 85-residue chain is LYR motif-containing protein 5A (85 aa).

Belongs to the complex I LYR family.

This chain is LYR motif-containing protein 5A (lyrm5a), found in Danio rerio (Zebrafish).